The following is a 270-amino-acid chain: Hematopoietically-expressed homeobox protein HHEX (270 aa).

The interval 1 to 137 (MQYPHPGPAA…PFLQRPLHKR (137 aa)) is interaction with SOX13. The residue at position 53 (Ser-53) is a Phosphoserine. Positions 137–196 (RKGGQVRFSNDQTIELEKKFETQKYLSPPERKRLAKMLQLSERQVKTWFQNRRAKWRRLK) form a DNA-binding region, homeobox. The required for WNT signaling induction stretch occupies residues 137–270 (RKGGQVRFSN…EGDKSYFNAG (134 aa)). The disordered stretch occupies residues 194–270 (RLKQENPQSN…EGDKSYFNAG (77 aa)). Over residues 222 to 241 (PSEQNKGASLDSSQCSPSPA) the composition is skewed to polar residues. Residues 244–260 (EDLESEISEDSDQEVDI) show a composition bias toward acidic residues.

Interacts with CD81; the interaction prevents nuclear translocation of HHEX. Interacts (via N-terminus) with SOX13; abolishes the SOX13-mediated inhibition of WNT-mediated transcriptional activity via competitive inhibition of the SOX13-TCF7 complex. Interacts with EIF4E; the interaction inhibits EIF4E-mediated mRNA nuclear export. As to expression, liver and promyelocytic leukemia cell line HL-60.

It is found in the nucleus. The protein resides in the nuclear body. Its subcellular location is the cytoplasm. Its function is as follows. Recognizes the DNA sequence 5'-ATTAA-3'. Transcriptional repressor. Activator of WNT-mediated transcription in conjunction with CTNNB1. Establishes anterior identity at two levels; acts early to enhance canonical WNT-signaling by repressing expression of TLE4, and acts later to inhibit NODAL-signaling by directly targeting NODAL. Inhibits EIF4E-mediated mRNA nuclear export. May play a role in hematopoietic differentiation. In Homo sapiens (Human), this protein is Hematopoietically-expressed homeobox protein HHEX (HHEX).